The sequence spans 200 residues: Prolactin-2 (200 aa).

Residues 1–23 (MRQRRISGSNLMMVLCVVAMCRA) form the signal peptide. 2 cysteine pairs are disulfide-bonded: Cys64–Cys173 and Cys190–Cys200.

This sequence belongs to the somatotropin/prolactin family.

It is found in the secreted. In Oreochromis mossambicus (Mozambique tilapia), this protein is Prolactin-2 (prl2).